Reading from the N-terminus, the 51-residue chain is Large ribosomal subunit protein bL33 (51 aa).

Belongs to the bacterial ribosomal protein bL33 family.

This is Large ribosomal subunit protein bL33 from Psychrobacter sp. (strain PRwf-1).